The sequence spans 469 residues: Adenosylhomocysteinase (469 aa).

Residues threonine 63, aspartate 139, and glutamate 164 each contribute to the substrate site. Position 165–167 (165–167 (TTT)) interacts with NAD(+). 2 residues coordinate substrate: lysine 194 and aspartate 198. NAD(+)-binding positions include asparagine 199, 228–233 (GYGDVG), glutamate 251, asparagine 300, 321–323 (IGH), and asparagine 375.

Belongs to the adenosylhomocysteinase family. NAD(+) serves as cofactor.

It localises to the cytoplasm. It catalyses the reaction S-adenosyl-L-homocysteine + H2O = L-homocysteine + adenosine. It functions in the pathway amino-acid biosynthesis; L-homocysteine biosynthesis; L-homocysteine from S-adenosyl-L-homocysteine: step 1/1. In terms of biological role, may play a key role in the regulation of the intracellular concentration of adenosylhomocysteine. The chain is Adenosylhomocysteinase from Ectopseudomonas mendocina (strain ymp) (Pseudomonas mendocina).